The following is a 58-amino-acid chain: Birtoxin (58 aa).

One can recognise an LCN-type CS-alpha/beta domain in the interval 3 to 58 (VPGNYPLDKDGNTYKCFLLGGNEECLNVCKLHGVQYGYCYASKCWCEYLEDDKDSV). 3 cysteine pairs are disulfide-bonded: Cys-18/Cys-41, Cys-27/Cys-46, and Cys-31/Cys-48.

Expressed by the venom gland.

It localises to the secreted. Functionally, beta toxins bind voltage-independently at site-4 of sodium channels (Nav) and shift the voltage of activation toward more negative potentials thereby affecting sodium channel activation and promoting spontaneous and repetitive firing. Moderately toxic, but very high abundant. Does not target reptilian channels. Does not produce effect when administered to blowfly and cabbage looper larvae. In mice, produces convulsions, tremors, increased ventilation and, subsequently, death. This Parabuthus transvaalicus (Transvaal thick-tailed scorpion) protein is Birtoxin.